Reading from the N-terminus, the 349-residue chain is S-adenosylmethionine:tRNA ribosyltransferase-isomerase (349 aa).

Belongs to the QueA family. As to quaternary structure, monomer.

It localises to the cytoplasm. It carries out the reaction 7-aminomethyl-7-carbaguanosine(34) in tRNA + S-adenosyl-L-methionine = epoxyqueuosine(34) in tRNA + adenine + L-methionine + 2 H(+). It participates in tRNA modification; tRNA-queuosine biosynthesis. In terms of biological role, transfers and isomerizes the ribose moiety from AdoMet to the 7-aminomethyl group of 7-deazaguanine (preQ1-tRNA) to give epoxyqueuosine (oQ-tRNA). The chain is S-adenosylmethionine:tRNA ribosyltransferase-isomerase from Ruegeria pomeroyi (strain ATCC 700808 / DSM 15171 / DSS-3) (Silicibacter pomeroyi).